We begin with the raw amino-acid sequence, 46 residues long: Protein krueppel (46 aa).

C2H2-type zinc fingers lie at residues 1–4, 10–32, and 38–46; these read MRLH, YQCL…LRVH, and YACEICPSR.

The protein belongs to the krueppel C2H2-type zinc-finger protein family.

The protein localises to the nucleus. In terms of biological role, krueppel is a gap class segmentation protein. This Pholcus phalangioides (Longbodied cellar spider) protein is Protein krueppel (Kr).